The primary structure comprises 409 residues: Inactive serine protease 35 (409 aa).

An N-terminal signal peptide occupies residues 1 to 20 (MENTLLWLVILIPGWALSDG). The N-linked (GlcNAc...) asparagine glycan is linked to Asn-90. The Peptidase S1 domain occupies 124 to 404 (VYGTDSRFSI…ICLWIHGNAA (281 aa)). Cys-154 and Cys-170 are disulfide-bonded. A compositionally biased stretch (basic residues) spans 188–207 (VLKMRNKGGRKKRRGSKRSR). The interval 188 to 247 (VLKMRNKGGRKKRRGSKRSRREAESAGQSQAHLRESTTQRPGKKSRRGPRVTQGRPSFQW) is disordered.

The protein belongs to the peptidase S1 family. In ovary, it localizes to the theca cells of pre-antral follicles, the theca and granulosa cells of pre-ovulatory and ovulatory follicles, as well as to the developing corpus luteum.

The protein resides in the secreted. This chain is Inactive serine protease 35 (Prss35), found in Mus musculus (Mouse).